Reading from the N-terminus, the 180-residue chain is tRNA (cytidine(56)-2'-O)-methyltransferase (180 aa).

S-adenosyl-L-methionine-binding positions include L84 and 112–116 (GAEKV).

This sequence belongs to the aTrm56 family. Homodimer.

The protein localises to the cytoplasm. The catalysed reaction is cytidine(56) in tRNA + S-adenosyl-L-methionine = 2'-O-methylcytidine(56) in tRNA + S-adenosyl-L-homocysteine + H(+). Specifically catalyzes the AdoMet-dependent 2'-O-ribose methylation of cytidine at position 56 in tRNAs. In Haloarcula marismortui (strain ATCC 43049 / DSM 3752 / JCM 8966 / VKM B-1809) (Halobacterium marismortui), this protein is tRNA (cytidine(56)-2'-O)-methyltransferase.